Here is a 947-residue protein sequence, read N- to C-terminus: Glutamate receptor 2.8 (947 aa).

A signal peptide spans 1–26 (MNPKKNNNTFLSYFVCLFLLLEVGLG). At 27 to 577 (QNQISEIKVG…NTWVFLKPWG (551 aa)) the chain is on the extracellular side. 8 N-linked (GlcNAc...) asparagine glycosylation sites follow: Asn-42, Asn-118, Asn-333, Asn-341, Asn-348, Asn-420, Asn-478, and Asn-524. Residues 578–598 (LDLWVTTACFFVLIGFVVWLF) traverse the membrane as a helical segment. The Cytoplasmic segment spans residues 599–607 (EHRVNTDFR). A helical transmembrane segment spans residues 608–628 (GPPHHQIGTSFWFSFSTMVFA). At 629-632 (HREK) the chain is on the cytoplasmic side. Residues 633–653 (VVSNLARFVVVVWCFVVLVLT) form a helical membrane-spanning segment. The Extracellular portion of the chain corresponds to 654–819 (QSYTANLTSF…NRLSLRSFWG (166 aa)). N-linked (GlcNAc...) asparagine glycosylation is found at Asn-659, Asn-704, Asn-723, and Asn-779. A helical membrane pass occupies residues 820–840 (LFLIAGIASFLALLIFVFLFL). The Cytoplasmic portion of the chain corresponds to 841–947 (YENRHTLCDD…ESDIECVVEQ (107 aa)).

This sequence belongs to the glutamate-gated ion channel (TC 1.A.10.1) family. As to quaternary structure, may form heteromers. Expressed predominantly in leaves.

It localises to the membrane. Its function is as follows. Glutamate-gated receptor that probably acts as a non-selective cation channel. May be involved in light-signal transduction and calcium homeostasis via the regulation of calcium influx into cells. This Arabidopsis thaliana (Mouse-ear cress) protein is Glutamate receptor 2.8 (GLR2.8).